A 56-amino-acid polypeptide reads, in one-letter code: Small ribosomal subunit protein uS14 (56 aa).

Residues C21, C24, C39, and C42 each contribute to the Zn(2+) site.

The protein belongs to the universal ribosomal protein uS14 family. Component of the 40S small ribosomal subunit. Zn(2+) serves as cofactor.

Its subcellular location is the cytoplasm. The protein localises to the cytosol. It is found in the rough endoplasmic reticulum. The chain is Small ribosomal subunit protein uS14 (RpS29) from Bombyx mori (Silk moth).